The following is an 87-amino-acid chain: Large ribosomal subunit protein bL31B (87 aa).

This sequence belongs to the bacterial ribosomal protein bL31 family. Type B subfamily. Part of the 50S ribosomal subunit.

The sequence is that of Large ribosomal subunit protein bL31B from Paraburkholderia phymatum (strain DSM 17167 / CIP 108236 / LMG 21445 / STM815) (Burkholderia phymatum).